The following is a 527-amino-acid chain: MAARCSIAFMVMASCLSVVVSGGLPGDLFAHSVASKLRVDRDTTARASSDFGRIVAAAPEAVLHPATPAEIAELVRFSASSPSPFPVAPRGQGHSARGQSLAPGGVVVDMRALAARRGRVNVSAGGAGAAPYVDAGGEQLWADVLRATLEHGLAPRVWTDYLRITVAGTLSNAGIGGQAFRHGPQIANVLELDVITGRGDMVTCSRDKEPDLFFAVLGGLGQFGIITRARIGLEPAPKRVRWVRLAYSDVVTFTRDQELLISKRASEAGFDYVEGQVQLNRTLTEGPKSTPFFSRFDIDRLAGLASESVSGVIYFIEGAMYYNESTTASVDQKLTSVLEQLSFDKGFVFTKDVSYVQFLDRVREEERILRSIGMWDVPHPWLNLFVPQSRILDFDTGVLKGVFVGANPVGVILMYPMNRNMWDDRMTAVSGNDDMFYVVGLLRSAVVPGDVERLERENEAVLAFCDNEGIGCKQYLPHYASQDGWRSHFGAKWSRVTELKVKYDPYGILSPGQRIFSSLTPMALVAM.

The signal sequence occupies residues 1–22; sequence MAARCSIAFMVMASCLSVVVSG. The 182-residue stretch at 55-236 folds into the FAD-binding PCMH-type domain; sequence VAAAPEAVLH…TRARIGLEPA (182 aa). FAD is bound by residues G91 and G93. A Pros-8alpha-FAD histidine modification is found at H94. Positions 95 and 99 each coordinate FAD. The N-linked (GlcNAc...) asparagine glycan is linked to N121. FAD contacts are provided by D160, T165, S171, I175, and I226. 2 N-linked (GlcNAc...) asparagine glycosylation sites follow: N280 and N323. Residues Y475, S510, and Q513 each contribute to the FAD site.

This sequence belongs to the oxygen-dependent FAD-linked oxidoreductase family. As to quaternary structure, monomer. It depends on FAD as a cofactor.

The protein localises to the secreted. Its subcellular location is the extracellular space. It carries out the reaction N(6)-dimethylallyladenine + A + H2O = 3-methyl-2-butenal + adenine + AH2. Catalyzes the oxidation of cytokinins, a family of N(6)-substituted adenine derivatives that are plant hormones, where the substituent is an isopentenyl group. In Oryza sativa subsp. japonica (Rice), this protein is Cytokinin dehydrogenase 6 (CKX6).